Here is an 89-residue protein sequence, read N- to C-terminus: Small ribosomal subunit protein uS15 (89 aa).

The protein belongs to the universal ribosomal protein uS15 family. Part of the 30S ribosomal subunit. Forms a bridge to the 50S subunit in the 70S ribosome, contacting the 23S rRNA.

Its function is as follows. One of the primary rRNA binding proteins, it binds directly to 16S rRNA where it helps nucleate assembly of the platform of the 30S subunit by binding and bridging several RNA helices of the 16S rRNA. Functionally, forms an intersubunit bridge (bridge B4) with the 23S rRNA of the 50S subunit in the ribosome. This is Small ribosomal subunit protein uS15 from Cupriavidus pinatubonensis (strain JMP 134 / LMG 1197) (Cupriavidus necator (strain JMP 134)).